Reading from the N-terminus, the 263-residue chain is Chymotrypsinogen B (263 aa).

The N-terminal stretch at 1–18 (MAFLWLVSCFALVGATFG) is a signal peptide. 5 disulfide bridges follow: cysteine 19–cysteine 140, cysteine 60–cysteine 76, cysteine 154–cysteine 219, cysteine 186–cysteine 200, and cysteine 209–cysteine 238. Residues 34–261 (IVNGEDAIPG…LMPWVQEILE (228 aa)) form the Peptidase S1 domain. Histidine 75 serves as the catalytic Charge relay system. Serine 93 carries the post-translational modification Phosphoserine. Aspartate 120 acts as the Charge relay system in catalysis. Serine 213 acts as the Charge relay system in catalysis.

It belongs to the peptidase S1 family.

The protein localises to the secreted. It localises to the extracellular space. The enzyme catalyses Preferential cleavage: Tyr-|-Xaa, Trp-|-Xaa, Phe-|-Xaa, Leu-|-Xaa.. The polypeptide is Chymotrypsinogen B (Ctrb1) (Mus musculus (Mouse)).